The sequence spans 255 residues: MNKRVKDVVDAIVAAVQRVLDQKEVTEAEYRTAVHYLMQVAEQRETALLCDVFFNSTVAATKARISEGSTPAIEGPYYRDDAPLVDDRLKTYDTDDHKPLLIQGTVKAVDGSVVEDVTIDVWHSTPDGKYSGFHDDIPTDFYRGKLRVGTDGSFRVRTTMPVPYQIPDQGPTGALLETMGGHSWRPAHVHFKVKAPGYETLTTQYYFEGGDWITDDCCNGVQSSLITPDIVEEGVRLMNINFVIEPARAQAGANP.

Fe cation-binding residues include Tyr130, Tyr164, His188, and His190.

The protein belongs to the intradiol ring-cleavage dioxygenase family. The cofactor is Fe(3+).

It catalyses the reaction 3,5-dichlorocatechol + O2 = (2E,4E)-2,4-dichloromuconate + 2 H(+). It participates in aromatic compound metabolism; 3-chlorocatechol degradation. Functionally, preferentially converts 3,5-dichlorocatechol as opposed to other chlorinated catechols. Retains diminished activity toward non-chlorinated substrates. This is Chlorocatechol 1,2-dioxygenase (tfdC) from Burkholderia cepacia (Pseudomonas cepacia).